A 535-amino-acid polypeptide reads, in one-letter code: Phosphoenolpyruvate carboxykinase (ATP) (535 aa).

Residues arginine 59, tyrosine 201, and lysine 207 each contribute to the substrate site. Residues lysine 207, histidine 226, and 243-251 (GLSGTGKTT) each bind ATP. Mn(2+) contacts are provided by lysine 207 and histidine 226. Mn(2+) is bound at residue aspartate 264. ATP is bound by residues glutamate 292, arginine 328, 444 to 445 (RI), and threonine 450. Arginine 328 provides a ligand contact to substrate.

Belongs to the phosphoenolpyruvate carboxykinase (ATP) family. Requires Mn(2+) as cofactor.

Its subcellular location is the cytoplasm. It carries out the reaction oxaloacetate + ATP = phosphoenolpyruvate + ADP + CO2. The protein operates within carbohydrate biosynthesis; gluconeogenesis. Functionally, involved in the gluconeogenesis. Catalyzes the conversion of oxaloacetate (OAA) to phosphoenolpyruvate (PEP) through direct phosphoryl transfer between the nucleoside triphosphate and OAA. The chain is Phosphoenolpyruvate carboxykinase (ATP) from Porphyromonas gingivalis (strain ATCC 33277 / DSM 20709 / CIP 103683 / JCM 12257 / NCTC 11834 / 2561).